Here is an 840-residue protein sequence, read N- to C-terminus: Axin-2 (840 aa).

The interval 1 to 75 (MSSAVLVTLL…EGRASPDSPL (75 aa)) is disordered. The Tankyrase-binding motif motif lies at 21–30 (APRPPVPGEE). A compositionally biased stretch (polar residues) spans 42–55 (KVQSTKPMPVSSNA). Over residues 56–69 (RRNEDGLGEPEGRA) the composition is skewed to basic and acidic residues. In terms of domain architecture, RGS spans 81–200 (SLHSLLGDQD…LTSDIYLEYV (120 aa)). Disordered stretches follow at residues 300 to 363 (SELS…KEMT), 398 to 435 (IRED…EEDP), 447 to 485 (LKTP…LLPT), 572 to 614 (RGGT…GDRS), and 715 to 745 (ASQQ…EDHK). Low complexity predominate over residues 303-318 (SSDALTDDSMSMTDSS). The interval 327 to 413 (MGSKKQLQRE…KEGSEQALSS (87 aa)) is interaction with GSK3B. An interaction with beta-catenin region spans residues 413-478 (SRDGAPVQHP…HHHQHHHHQQ (66 aa)). Residues 468 to 478 (DHHHQHHHHQQ) are compositionally biased toward basic residues. The region spanning 758 to 840 (ASELVVTYFF…RILGKVERID (83 aa)) is the DIX domain.

As to quaternary structure, interacts with glycogen synthase kinase-3 beta (GSK3B) and beta-catenin. The interaction between axin and beta-catenin occurs via the armadillo repeats contained in beta-catenin. Interacts with SMAD7 and RNF111. Interacts with ANKRD6. Interacts with SIAH1. Interacts with SIAH2. ADP-ribosylated by tankyrase TNKS and TNKS2. Poly-ADP-ribosylated protein is recognized by RNF146, followed by ubiquitination and subsequent activation of the Wnt signaling pathway. Post-translationally, ubiquitinated by RNF146 when poly-ADP-ribosylated, leading to its degradation and subsequent activation of the Wnt signaling pathway. Deubiquitinated by USP34, deubiquitinated downstream of beta-catenin stabilization step: deubiquitination is important Wnt signaling to positively regulate beta-catenin (CTNBB1)-mediated transcription. In terms of processing, probably phosphorylated by GSK3B and dephosphorylated by PP2A. As to expression, expressed in Tcf7-positive innate-like T-cells (at protein level).

The protein resides in the cytoplasm. In terms of biological role, inhibitor of the Wnt signaling pathway. Down-regulates beta-catenin. Probably facilitate the phosphorylation of beta-catenin and APC by GSK3B. The sequence is that of Axin-2 from Mus musculus (Mouse).